Consider the following 943-residue polypeptide: 2-oxoglutarate dehydrogenase E1 component (943 aa).

The protein belongs to the alpha-ketoglutarate dehydrogenase family. In terms of assembly, homodimer. Part of the 2-oxoglutarate dehydrogenase (OGDH) complex composed of E1 (2-oxoglutarate dehydrogenase), E2 (dihydrolipoamide succinyltransferase) and E3 (dihydrolipoamide dehydrogenase); the complex contains multiple copies of the three enzymatic components (E1, E2 and E3). The cofactor is thiamine diphosphate.

It carries out the reaction N(6)-[(R)-lipoyl]-L-lysyl-[protein] + 2-oxoglutarate + H(+) = N(6)-[(R)-S(8)-succinyldihydrolipoyl]-L-lysyl-[protein] + CO2. In terms of biological role, E1 component of the 2-oxoglutarate dehydrogenase (OGDH) complex which catalyzes the decarboxylation of 2-oxoglutarate, the first step in the conversion of 2-oxoglutarate to succinyl-CoA and CO(2). The sequence is that of 2-oxoglutarate dehydrogenase E1 component (sucA) from Azotobacter vinelandii.